Here is a 232-residue protein sequence, read N- to C-terminus: Small ribosomal subunit protein uS3 (232 aa).

In terms of domain architecture, KH type-2 spans 39–107 (IRKFLKKELF…DVAINIKEEK (69 aa)). A disordered region spans residues 213–232 (QPEPAEEKKGGRRPSRKRGE). A compositionally biased stretch (basic residues) spans 222–232 (GGRRPSRKRGE).

Belongs to the universal ribosomal protein uS3 family. As to quaternary structure, part of the 30S ribosomal subunit. Forms a tight complex with proteins S10 and S14.

Its function is as follows. Binds the lower part of the 30S subunit head. Binds mRNA in the 70S ribosome, positioning it for translation. The protein is Small ribosomal subunit protein uS3 of Sulfurovum sp. (strain NBC37-1).